Here is a 267-residue protein sequence, read N- to C-terminus: Putative ankyrin repeat protein RF_1099 (267 aa).

ANK repeat units follow at residues 46–75, 78–107, 136–165, and 170–199; these read DPIT…GVNQ, LGWV…SMSL, DGIT…NPNV, and TGMT…DPNI. A coiled-coil region spans residues 238–265; sequence KQKIIKERNSIKTRNKEKEKEIKKLFNS.

This Rickettsia felis (strain ATCC VR-1525 / URRWXCal2) (Rickettsia azadi) protein is Putative ankyrin repeat protein RF_1099.